The sequence spans 78 residues: Acyl carrier protein (78 aa).

In terms of domain architecture, Carrier spans 2 to 77 (STIEERVKKI…AAIDYVNSHK (76 aa)). Ser-37 is modified (O-(pantetheine 4'-phosphoryl)serine).

Belongs to the acyl carrier protein (ACP) family. In terms of processing, 4'-phosphopantetheine is transferred from CoA to a specific serine of apo-ACP by AcpS. This modification is essential for activity because fatty acids are bound in thioester linkage to the sulfhydryl of the prosthetic group.

Its subcellular location is the cytoplasm. Its pathway is lipid metabolism; fatty acid biosynthesis. Its function is as follows. Carrier of the growing fatty acid chain in fatty acid biosynthesis. This is Acyl carrier protein from Pseudomonas putida (strain GB-1).